Consider the following 125-residue polypeptide: Glycine cleavage system H protein (125 aa).

One can recognise a Lipoyl-binding domain in the interval 23-103; the sequence is TALVGITDFA…PYNAWLIKMK (81 aa). K64 is modified (N6-lipoyllysine).

It belongs to the GcvH family. As to quaternary structure, the glycine cleavage system is composed of four proteins: P, T, L and H. Requires (R)-lipoate as cofactor.

Functionally, the glycine cleavage system catalyzes the degradation of glycine. The H protein shuttles the methylamine group of glycine from the P protein to the T protein. The sequence is that of Glycine cleavage system H protein from Chlorobium chlorochromatii (strain CaD3).